The primary structure comprises 308 residues: Transaldolase (308 aa).

Lys125 serves as the catalytic Schiff-base intermediate with substrate.

The protein belongs to the transaldolase family. Type 1 subfamily. As to quaternary structure, homodimer.

It localises to the cytoplasm. It carries out the reaction D-sedoheptulose 7-phosphate + D-glyceraldehyde 3-phosphate = D-erythrose 4-phosphate + beta-D-fructose 6-phosphate. Its pathway is carbohydrate degradation; pentose phosphate pathway; D-glyceraldehyde 3-phosphate and beta-D-fructose 6-phosphate from D-ribose 5-phosphate and D-xylulose 5-phosphate (non-oxidative stage): step 2/3. Its function is as follows. Transaldolase is important for the balance of metabolites in the pentose-phosphate pathway. The sequence is that of Transaldolase from Pseudomonas fluorescens (strain Pf0-1).